The sequence spans 447 residues: ATP-dependent protease ATPase subunit HslU (447 aa).

Residues Ile17 and 59–64 (GVGKTE) contribute to the ATP site. The tract at residues 136–160 (PPARGGFQGEPTAEEKPTEKKESAT) is disordered. A compositionally biased stretch (basic and acidic residues) spans 148–159 (AEEKPTEKKESA). Residues Asp260, Glu325, and Arg397 each coordinate ATP.

The protein belongs to the ClpX chaperone family. HslU subfamily. A double ring-shaped homohexamer of HslV is capped on each side by a ring-shaped HslU homohexamer. The assembly of the HslU/HslV complex is dependent on binding of ATP.

The protein resides in the cytoplasm. Functionally, ATPase subunit of a proteasome-like degradation complex; this subunit has chaperone activity. The binding of ATP and its subsequent hydrolysis by HslU are essential for unfolding of protein substrates subsequently hydrolyzed by HslV. HslU recognizes the N-terminal part of its protein substrates and unfolds these before they are guided to HslV for hydrolysis. The protein is ATP-dependent protease ATPase subunit HslU of Coxiella burnetii (strain Dugway 5J108-111).